Reading from the N-terminus, the 314-residue chain is tRNA dimethylallyltransferase (314 aa).

12-19 contacts ATP; it reads GPTASGKT. 14–19 contacts substrate; the sequence is TASGKT. Interaction with substrate tRNA regions lie at residues 37 to 40 and 161 to 165; these read DSAQ and QRIQR.

The protein belongs to the IPP transferase family. As to quaternary structure, monomer. Mg(2+) serves as cofactor.

The catalysed reaction is adenosine(37) in tRNA + dimethylallyl diphosphate = N(6)-dimethylallyladenosine(37) in tRNA + diphosphate. Its function is as follows. Catalyzes the transfer of a dimethylallyl group onto the adenine at position 37 in tRNAs that read codons beginning with uridine, leading to the formation of N6-(dimethylallyl)adenosine (i(6)A). The sequence is that of tRNA dimethylallyltransferase from Nitrosococcus oceani (strain ATCC 19707 / BCRC 17464 / JCM 30415 / NCIMB 11848 / C-107).